A 469-amino-acid polypeptide reads, in one-letter code: UDP-N-acetylmuramoylalanine--D-glutamate ligase (469 aa).

123–129 (GTNGKST) provides a ligand contact to ATP.

This sequence belongs to the MurCDEF family.

The protein resides in the cytoplasm. It catalyses the reaction UDP-N-acetyl-alpha-D-muramoyl-L-alanine + D-glutamate + ATP = UDP-N-acetyl-alpha-D-muramoyl-L-alanyl-D-glutamate + ADP + phosphate + H(+). It functions in the pathway cell wall biogenesis; peptidoglycan biosynthesis. Cell wall formation. Catalyzes the addition of glutamate to the nucleotide precursor UDP-N-acetylmuramoyl-L-alanine (UMA). The sequence is that of UDP-N-acetylmuramoylalanine--D-glutamate ligase from Caulobacter sp. (strain K31).